The primary structure comprises 488 residues: H2.0-like homeobox protein (488 aa).

Disordered regions lie at residues 118–173 and 331–488; these read AYHH…SSKD and WRHS…LGCL. Composition is skewed to low complexity over residues 125-135 and 158-171; these read QQQQQQQQPQQ and PNPH…APSS. The homeobox DNA-binding region spans 276-335; it reads RSWSRAVFSNLQRKGLEKRFEIQKYVTKPDRKQLAAMLGLTDAQVKVWFQNRRMKWRHSK. 2 stretches are compositionally biased toward basic and acidic residues: residues 334–349 and 363–372; these read SKEA…EAGE and DERSPSRSEG. Over residues 373-383 the composition is skewed to acidic residues; sequence EAESESSDSES. Over residues 390–401 the composition is skewed to basic and acidic residues; sequence DTERTEGSERSL. The span at 422–432 shows a compositional bias: gly residues; the sequence is GSGGSSGGGGN. The span at 433–454 shows a compositional bias: low complexity; the sequence is SFSFSSASSLSSSSTSAGCASS.

It belongs to the H2.0 homeobox family. Low level in normal B and T-cells, high level in activated lymphocytes and monocytes. Also found in thymus, tonsil, bone marrow, developing vessels, and fetal brain.

The protein resides in the nucleus. In terms of biological role, transcription factor required for TBX21/T-bet-dependent maturation of Th1 cells as well as maintenance of Th1-specific gene expression. Involved in embryogenesis and hematopoiesis. The sequence is that of H2.0-like homeobox protein (HLX) from Homo sapiens (Human).